A 1093-amino-acid polypeptide reads, in one-letter code: Fused isobutyryl-CoA mutase (1093 aa).

The tract at residues 1-20 (MTDLSDVSRTAAAKPPAVPG) is disordered. The B12-binding domain occupies 26-156 (KVRFVTAASL…AGMITDMAQR (131 aa)). Histidine 39 is an adenosylcob(III)alamin binding site. Residues 169–417 (LDTVVAGDRR…YQGLVGALGA (249 aa)) are GTPase chaperone MeaI. 219 to 224 (GAGKSS) provides a ligand contact to GTP. Mg(2+) contacts are provided by serine 223, isoleucine 248, aspartate 249, and aspartate 262. Arginine 265 serves as a coordination point for GTP. The Mg(2+) site is built by glutamate 310 and threonine 311. 357–360 (NKFD) provides a ligand contact to GTP. The tract at residues 418–579 (RGMSLKPGTL…MRENVPGSFP (162 aa)) is linker. Residues phenylalanine 587, arginine 622, arginine 728, tyrosine 772, serine 821, arginine 856, and lysine 861 each contribute to the substrate site. The GTP site is built by glutamate 973 and asparagine 1092.

This sequence belongs to the IcmF family. In terms of assembly, homodimer. Adenosylcob(III)alamin serves as cofactor. Requires Mg(2+) as cofactor.

The catalysed reaction is 2-methylpropanoyl-CoA = butanoyl-CoA. It carries out the reaction 3-methylbutanoyl-CoA = 2,2-dimethylpropanoyl-CoA. It catalyses the reaction GTP + H2O = GDP + phosphate + H(+). Is prone to inactivation during catalytic turnover due to the occasional loss of the 5'-deoxyadenosine moiety and formation of the inactive cob(II)alamin cofactor in its active site. The GTPase activity of IcmF powers the ejection of the inactive cofactor and requires the presence of an acceptor protein, adenosyltransferase (ATR), for receiving it. ATR, in turn, catalyzes an adenosylation reaction converting cob(II)alamin in the presence of ATP and a reductant to the active AdoCbl cofactor. The repaired cofactor is then reloaded onto IcmF in a GTPase-gated step, regenerating active enzyme. The GTPase activity of IcmF is significantly decreased in the presence of excess of AdoCbl or cob(II)alamin and is higher in the apoenzyme state, indicating that the G-domain senses the presence and identity of the cofactor in the mutase active site. In terms of biological role, catalyzes the reversible interconversion of isobutyryl-CoA and n-butyryl-CoA, and to a much lesser extent, of pivalyl-CoA and isovaleryl-CoA, using radical chemistry. Also exhibits GTPase activity, associated with its G-protein domain (MeaI) that functions as a chaperone that assists cofactor delivery and proper holo-enzyme assembly. The G-domain of IcmF also has a role in its cofactor repair. Does not display ATPase activity. The chain is Fused isobutyryl-CoA mutase from Cupriavidus metallidurans (strain ATCC 43123 / DSM 2839 / NBRC 102507 / CH34) (Ralstonia metallidurans).